A 181-amino-acid chain; its full sequence is Translation initiation factor IF-3 (181 aa).

This sequence belongs to the IF-3 family. Monomer.

Its subcellular location is the cytoplasm. Its function is as follows. IF-3 binds to the 30S ribosomal subunit and shifts the equilibrium between 70S ribosomes and their 50S and 30S subunits in favor of the free subunits, thus enhancing the availability of 30S subunits on which protein synthesis initiation begins. This is Translation initiation factor IF-3 from Pseudoalteromonas translucida (strain TAC 125).